We begin with the raw amino-acid sequence, 257 residues long: NAD-capped RNA hydrolase NudC (257 aa).

R69 contributes to the substrate binding site. 2 residues coordinate Zn(2+): C98 and C101. E111 is a binding site for substrate. Zn(2+) contacts are provided by C116 and C119. Residue Y124 participates in substrate binding. In terms of domain architecture, Nudix hydrolase spans P125–T248. A divalent metal cation contacts are provided by A158, E174, and E178. The Nudix box signature appears at G159–G180. Q192–S199 is a binding site for substrate. E219 provides a ligand contact to a divalent metal cation. Residue A241 coordinates substrate.

It belongs to the Nudix hydrolase family. NudC subfamily. In terms of assembly, homodimer. The cofactor is Mg(2+). Mn(2+) is required as a cofactor. Requires Zn(2+) as cofactor.

The catalysed reaction is a 5'-end NAD(+)-phospho-ribonucleoside in mRNA + H2O = a 5'-end phospho-adenosine-phospho-ribonucleoside in mRNA + beta-nicotinamide D-ribonucleotide + 2 H(+). It carries out the reaction NAD(+) + H2O = beta-nicotinamide D-ribonucleotide + AMP + 2 H(+). It catalyses the reaction NADH + H2O = reduced beta-nicotinamide D-ribonucleotide + AMP + 2 H(+). Functionally, mRNA decapping enzyme that specifically removes the nicotinamide adenine dinucleotide (NAD) cap from a subset of mRNAs by hydrolyzing the diphosphate linkage to produce nicotinamide mononucleotide (NMN) and 5' monophosphate mRNA. The NAD-cap is present at the 5'-end of some mRNAs and stabilizes RNA against 5'-processing. Has preference for mRNAs with a 5'-end purine. Catalyzes the hydrolysis of a broad range of dinucleotide pyrophosphates. The sequence is that of NAD-capped RNA hydrolase NudC from Salmonella choleraesuis (strain SC-B67).